Reading from the N-terminus, the 224-residue chain is Phosphoglycolate phosphatase (224 aa).

Asp11 functions as the Nucleophile in the catalytic mechanism. Residues Asp11, Asp13, and Asp177 each contribute to the Mg(2+) site.

This sequence belongs to the HAD-like hydrolase superfamily. CbbY/CbbZ/Gph/YieH family. Mg(2+) is required as a cofactor.

It catalyses the reaction 2-phosphoglycolate + H2O = glycolate + phosphate. The protein operates within organic acid metabolism; glycolate biosynthesis; glycolate from 2-phosphoglycolate: step 1/1. Functionally, specifically catalyzes the dephosphorylation of 2-phosphoglycolate. Is involved in the dissimilation of the intracellular 2-phosphoglycolate formed during the DNA repair of 3'-phosphoglycolate ends, a major class of DNA lesions induced by oxidative stress. This chain is Phosphoglycolate phosphatase, found in Haemophilus influenzae (strain 86-028NP).